Reading from the N-terminus, the 213-residue chain is Glutathione S-transferase DHAR2 (213 aa).

Cysteine 6 is subject to S-glutathionyl cysteine. Residues lysine 8 and aspartate 19 each coordinate glutathione. L-ascorbate contacts are provided by lysine 8 and aspartate 19. The GST N-terminal domain maps to 10–83; that stretch reads AVGAPDVLGD…DVIVGLLEEK (74 aa). Cysteine 20 carries the S-glutathionyl cysteine modification. Cysteine 20 functions as the Nucleophile in the catalytic mechanism. Positions 20–25 match the Glutathione-binding motif; that stretch reads CPFSQR. 5 residues coordinate glutathione: lysine 47, valine 60, serine 73, histidine 160, and tryptophan 207. The region spanning 84–213 is the GST C-terminal domain; the sequence is YPEPSLKTPP…VAGWESKVNA (130 aa). An L-ascorbate-binding site is contributed by lysine 210.

This sequence belongs to the GST superfamily. DHAR family. In terms of assembly, monomer. In terms of processing, spontaneous S-glutathionylation in the presence of oxidized glutathione (GSSG).

It localises to the cytoplasm. The protein localises to the cytosol. The catalysed reaction is RX + glutathione = an S-substituted glutathione + a halide anion + H(+). It catalyses the reaction L-dehydroascorbate + 2 glutathione = glutathione disulfide + L-ascorbate. Its function is as follows. Displays a dual function. As a soluble protein, exhibits glutathione-dependent thiol transferase and dehydroascorbate (DHA) reductase activities. Exhibits glutathione-dependent thiol transferase and dehydroascorbate (DHA) reductase activities. Key component of the ascorbate recycling system. Involved in the redox homeostasis, especially in scavenging of ROS under oxidative stresses. Plays a role in ozone tolerance. This is Glutathione S-transferase DHAR2 (DHAR2) from Arabidopsis thaliana (Mouse-ear cress).